We begin with the raw amino-acid sequence, 679 residues long: Protein hook (679 aa).

The 119-residue stretch at 5–123 (NGMYYSLLEW…RLLQLVLGCA (119 aa)) folds into the Calponin-homology (CH) domain. Residues 140 to 627 (EEELQANIMR…SKTKMSTMEE (488 aa)) adopt a coiled-coil conformation.

This sequence belongs to the hook family. In terms of assembly, homodimer. Interacts with microtubules via its N-terminus.

It localises to the cytoplasm. Its subcellular location is the cytoskeleton. The protein localises to the endosome. It is found in the synapse. Involved in endocytic trafficking by stabilizing organelles of the endocytic pathway. Probably acts as a cytoskeletal linker protein required to tether endosome vesicles to the cytoskeleton. Involved in modulation of endocytosis at stages required for down-regulation of membrane proteins that control synapse size. Not involved in synaptic vesicle recycling. Required in R7 cells for boss endocytosis into multivesicular bodies (MVBs). Has a role in regulating adult longevity. The sequence is that of Protein hook from Drosophila mojavensis (Fruit fly).